The sequence spans 342 residues: Manganese-dependent ADP-ribose/CDP-alcohol diphosphatase (342 aa).

Positions 18, 20, 67, 103, 239, 276, and 278 each coordinate Zn(2+).

Belongs to the ADPRibase-Mn family. In terms of assembly, monomer. Requires Mg(2+) as cofactor.

The catalysed reaction is CDP-choline + H2O = phosphocholine + CMP + 2 H(+). It catalyses the reaction ADP-D-ribose + H2O = D-ribose 5-phosphate + AMP + 2 H(+). It carries out the reaction CDP-glycerol + H2O = sn-glycerol 3-phosphate + CMP + 2 H(+). In terms of biological role, hydrolyzes ADP-ribose, IDP-ribose, CDP-glycerol, CDP-choline and CDP-ethanolamine, but not other non-reducing ADP-sugars or CDP-glucose. This Xenopus tropicalis (Western clawed frog) protein is Manganese-dependent ADP-ribose/CDP-alcohol diphosphatase (adprm).